Reading from the N-terminus, the 395-residue chain is Putative gustatory receptor 93b (395 aa).

Topologically, residues 1 to 18 (MSGLLVMPRILRCLNVSR) are cytoplasmic. The helical transmembrane segment at 19 to 39 (ISAILLRSCFLYGTFFGVITF) threads the bilayer. Residues 40–89 (RIERKDSQLVAINRRGYLWICLVIRLLASCFYGYSYDAWSGQYEDMYLRA) lie on the Extracellular side of the membrane. Residues 90–110 (FFGFRLIGCLICSVIILVMQF) form a helical membrane-spanning segment. Over 111–153 (WFGEELINLVNRFLQLFRRMQSLTNSPKNRFGDRAEFLLMFSK) the chain is Cytoplasmic. The helical transmembrane segment at 154–174 (VFSLLFVFMAFRLMLSPWFLL) threads the bilayer. Over 175-183 (TLVCDLYTS) the chain is Extracellular. The chain crosses the membrane as a helical span at residues 184-204 (VGTGMITHLCFVGYLSIGVLY). Topologically, residues 205 to 267 (RDLNNYVDCQ…RSFQQLFDLP (63 aa)) are cytoplasmic. Residues 268–288 (LFLSLAQSLLAMSMVSYHAIL) traverse the membrane as a helical segment. At 289-293 (RRQYS) the chain is on the extracellular side. Residues 294–314 (FNLWGLVIKLLIDVVLLTMSV) traverse the membrane as a helical segment. Over 315 to 369 (HSAVNGSRLIRRLSFENFYVTDSQSYHQKLELFLGRLQHQELRVFPLGLFEVSNE) the chain is Cytoplasmic. A helical transmembrane segment spans residues 370–390 (LTLFFLSAMVTYLVFLVQYGM). Topologically, residues 391–395 (QSQQI) are extracellular.

The protein belongs to the insect chemoreceptor superfamily. Gustatory receptor (GR) family. Gr93a subfamily. In larvae, is expressed in neurons of the terminal external chemosensory organ and of the dorsal pharyngeal sense organ.

It localises to the cell membrane. In terms of biological role, probable gustatory receptor which mediates acceptance or avoidance behavior, depending on its substrates. In Drosophila melanogaster (Fruit fly), this protein is Putative gustatory receptor 93b (Gr93b).